A 233-amino-acid polypeptide reads, in one-letter code: Large ribosomal subunit protein uL3 (233 aa).

Belongs to the universal ribosomal protein uL3 family. As to quaternary structure, part of the 50S ribosomal subunit. Forms a cluster with proteins L14 and L19.

One of the primary rRNA binding proteins, it binds directly near the 3'-end of the 23S rRNA, where it nucleates assembly of the 50S subunit. The polypeptide is Large ribosomal subunit protein uL3 (Ureaplasma parvum serovar 3 (strain ATCC 27815 / 27 / NCTC 11736)).